Here is a 391-residue protein sequence, read N- to C-terminus: Nucleosome assembly protein 1-like 1 (391 aa).

A compositionally biased stretch (basic and acidic residues) spans 1–10 (MADIDNKEQS). Residues 1-32 (MADIDNKEQSELDQDLDDVEEVEEEETGEETK) are disordered. N-acetylalanine is present on Ala-2. At Ser-10 the chain carries Phosphoserine. Positions 11 to 28 (ELDQDLDDVEEVEEEETG) are enriched in acidic residues. Phosphothreonine occurs at positions 62 and 64. Residue Ser-69 is modified to Phosphoserine. N6-acetyllysine is present on Lys-116. The NAP1L motif signature appears at 125 to 150 (YEPTEEECEWKPDEEDEISEELKEKA). Residues 132 to 143 (CEWKPDEEDEIS) are compositionally biased toward acidic residues. A disordered region spans residues 132-163 (CEWKPDEEDEISEELKEKAKVEDEKKDEEKED). A Phosphoserine modification is found at Ser-143. Positions 144–163 (EELKEKAKVEDEKKDEEKED) are enriched in basic and acidic residues. The Nuclear localization signal motif lies at 273 to 279 (IKKKQKH). Residues 345–391 (EAIEDDDDDYDEEGEEADEEGEEEGDEENDPDYDPKKDQNPAECKQQ) form a disordered region. A compositionally biased stretch (acidic residues) spans 346–376 (AIEDDDDDYDEEGEEADEEGEEEGDEENDPD). 5-glutamyl polyglycine occurs at positions 359 and 360. A compositionally biased stretch (basic and acidic residues) spans 377 to 391 (YDPKKDQNPAECKQQ). Cys-388 is modified (cysteine methyl ester). A lipid anchor (S-farnesyl cysteine) is attached at Cys-388. Positions 389 to 391 (KQQ) are cleaved as a propeptide — removed in mature form.

It belongs to the nucleosome assembly protein (NAP) family. In terms of assembly, homodimer. The dimer binds strongly and sequentially to single and double H2A-H2B heterodimers. Interacts with ERCC6; this interaction increases ERCC6 processivity. Interacts with RAD54. Interacts with SETD1A. Post-translationally, polyglycylated by TTLL10 on glutamate residues, resulting in polyglycine chains on the gamma-carboxyl group. Both polyglutamylation and polyglycylation modifications can coexist on the same protein on adjacent residues, and lowering polyglycylation levels increases polyglutamylation, and reciprocally. In terms of processing, polyglutamylated by TTLL4 on glutamate residues, resulting in polyglutamate chains on the gamma-carboxyl group. Both polyglutamylation and polyglycylation modifications can coexist on the same protein on adjacent residues, and lowering polyglycylation levels increases polyglutamylation, and reciprocally.

Its subcellular location is the nucleus. The protein localises to the melanosome. The protein resides in the cytoplasm. Histone chaperone that plays a role in the nuclear import of H2A-H2B and nucleosome assembly. Also participates in several important DNA repair mechanisms: greatly enhances ERCC6-mediated chromatin remodeling which is essential for transcription-coupled nucleotide excision DNA repair. Also stimulates homologous recombination (HR) by RAD51 and RAD54 which is essential in mitotic DNA double strand break (DSB) repair. Plays a key role in the regulation of embryonic neurogenesis. Promotes the proliferation of neural progenitors and inhibits neuronal differentiation during cortical development. Regulates neurogenesis via the modulation of RASSF10; regulates RASSF10 expression by promoting SETD1A-mediated H3K4 methylation at the RASSF10 promoter. This Bos taurus (Bovine) protein is Nucleosome assembly protein 1-like 1 (NAP1L1).